Reading from the N-terminus, the 429-residue chain is Enolase (429 aa).

Residue Gln-163 coordinates (2R)-2-phosphoglycerate. Glu-205 acts as the Proton donor in catalysis. The Mg(2+) site is built by Asp-242, Glu-286, and Asp-313. Positions 338, 367, 368, and 389 each coordinate (2R)-2-phosphoglycerate. Lys-338 serves as the catalytic Proton acceptor.

The protein belongs to the enolase family. It depends on Mg(2+) as a cofactor.

It is found in the cytoplasm. The protein localises to the secreted. The protein resides in the cell surface. It catalyses the reaction (2R)-2-phosphoglycerate = phosphoenolpyruvate + H2O. Its pathway is carbohydrate degradation; glycolysis; pyruvate from D-glyceraldehyde 3-phosphate: step 4/5. In terms of biological role, catalyzes the reversible conversion of 2-phosphoglycerate (2-PG) into phosphoenolpyruvate (PEP). It is essential for the degradation of carbohydrates via glycolysis. In Thermoanaerobacter pseudethanolicus (strain ATCC 33223 / 39E) (Clostridium thermohydrosulfuricum), this protein is Enolase.